Reading from the N-terminus, the 398-residue chain is Pentalenolactone synthase (398 aa).

Cys-347 lines the heme pocket.

This sequence belongs to the cytochrome P450 family. It depends on heme as a cofactor.

The enzyme catalyses pentalenolactone F + 2 reduced [2Fe-2S]-[ferredoxin] + O2 + 2 H(+) = pentalenolactone + 2 oxidized [2Fe-2S]-[ferredoxin] + 2 H2O. It functions in the pathway antibiotic biosynthesis; pentalenolactone biosynthesis. In terms of biological role, catalyzes the final step in the biosynthesis of the sesquiterpenoid antibiotic pentalenolactone by mediating the oxidative rearrangement of pentalenolactone F to pentalenolactone. This Streptomyces exfoliatus (Streptomyces hydrogenans) protein is Pentalenolactone synthase (penM).